Consider the following 322-residue polypeptide: Aldo-keto reductase family 1 member C23 (322 aa).

NADP(+) is bound at residue 20 to 24 (GFGTY). Position 31 (Lys-31) interacts with substrate. Asp-50 is a binding site for NADP(+). Tyr-55 (proton donor) is an active-site residue. Residue His-117 participates in substrate binding. NADP(+) contacts are provided by residues 166 to 167 (SN), Gln-190, 216 to 221 (YSALGS), and 269 to 279 (KSYNEKRIKEN).

Belongs to the aldo/keto reductase family. Monomer. As to expression, detected in follicle granulosa cells (at protein level). Detected in heart, lung, liver, kidney, stomach, uterus, testis, skeletal muscle and granulosa cells of the follicle wall.

It localises to the cytoplasm. Functionally, NADP-dependent oxidoreductase that has 20-alpha-hydroxysteroid dehydrogenase activity. This chain is Aldo-keto reductase family 1 member C23 (AKR1C23), found in Equus caballus (Horse).